The sequence spans 708 residues: MGEPPPNPDPSQTRRASQGSERARSQEYSQPLLTIPEDGLNRPPPQRGSRSSQGSQDLQGTGLPHWPQRSSLVPDVQGDEGTEYHQSMPLGYTPGFPMEFSQQGYLDDSRMMEQFPQGQDLLEQLESTYQGSASGILGQLNLYPREDEIFSQDTQHGPYLRDDPSLHLRPSDLGFMPIVGEVPDPEPRELAIQNAKAYLLRTSMSCNLSLYEHLVNLLTKILNQRPEDPLSILESLNRTMQWEWFHPKLDTLRDDPEMQPTYEMAEKQKALFIRGGGEGEQEMEEEVTDSPVPNIMETAFYFEQAGVGLSSDESFRIFLALKQLVEQQPIHMCRFWGKILGLSRSYLVAEVEFREGEEEGEEEEVEEMMEGGEVLETHGEEEGEEDEEKVVDSVPKPQWKPPPIIPKEESRSGTNKYLYFVCNEPGRPWTRLPHVTPAQIVCARKIKKFFTGFLDTPVISYPPFPGNEANYLRAQIARISAATHISPLGFYQFGEEEGDEEEEGGAGRDSFEENPDFEGIPVLELVDSMANWVHHTQHILPQGRCTWVNPLQKTEEEEELGEEEEKADEAMEEVEQEVGPPLLTPLSEDAEIMHLSPWTTRLSCSLSPQYSVAIVRSNLWPGAYAYATGKKFENIYIGWGHKYSPENFNPMLPALIQQEYPSGPEITEMSDPTVEEEQALKAAQEQALAAAEEEEEDEEEEEDEDLED.

Disordered stretches follow at residues 1 to 94, 376 to 407, 495 to 514, and 663 to 708; these read MGEP…GYTP, ETHGEEEGEEDEEKVVDSVPKPQWKPPPIIPK, EEEGDEEEEGGAGRDSFEEN, and GPEI…DLED. Residues 10–32 show a composition bias toward polar residues; it reads PSQTRRASQGSERARSQEYSQPL. Positions 47–56 are enriched in low complexity; it reads RGSRSSQGSQ. Acidic residues predominate over residues 495–504; that stretch reads EEEGDEEEEG. Over residues 680-690 the composition is skewed to low complexity; that stretch reads LKAAQEQALAA. Positions 691–708 are enriched in acidic residues; the sequence is AEEEEEDEEEEEDEDLED.

The protein belongs to the flagellar radial spoke RSP4/6 family. Component of the axonemal radial spoke 1 (RS1) and 2 (RS2) complexes, at least composed of spoke head proteins RSPH1, RSPH3, RSPH9 and the cilia-specific component RSPH4A or sperm-specific component RSPH6A, spoke stalk proteins RSPH14, DNAJB13, DYDC1, ROPN1L and NME5, and the RS1 complex-specific anchor protein IQUB. Interacts with RSPH1. Interacts with RSPH3B. Interacts with RSPH4A. Interacts with RSPH9. Interacts with RSPH10B. Post-translationally, phosphorylated by PKA. Phosphorylation increases in capacitated sperm. In terms of tissue distribution, expressed in sperm and testis (at protein level).

Its subcellular location is the cytoplasm. It localises to the cytoskeleton. It is found in the flagellum axoneme. In terms of biological role, functions as part of radial spoke complexes in the axoneme of sperm flagella that play an important part in motility. The triple radial spokes (RS1, RS2 and RS3) are required to modulate beating of the sperm flagellum. In Mus musculus (Mouse), this protein is Radial spoke head protein 6 homolog A.